A 242-amino-acid chain; its full sequence is Ubiquinone biosynthesis O-methyltransferase (242 aa).

The S-adenosyl-L-methionine site is built by arginine 36, glycine 56, aspartate 77, and methionine 130.

This sequence belongs to the methyltransferase superfamily. UbiG/COQ3 family.

It carries out the reaction a 3-demethylubiquinol + S-adenosyl-L-methionine = a ubiquinol + S-adenosyl-L-homocysteine + H(+). It catalyses the reaction a 3-(all-trans-polyprenyl)benzene-1,2-diol + S-adenosyl-L-methionine = a 2-methoxy-6-(all-trans-polyprenyl)phenol + S-adenosyl-L-homocysteine + H(+). Its pathway is cofactor biosynthesis; ubiquinone biosynthesis. Its function is as follows. O-methyltransferase that catalyzes the 2 O-methylation steps in the ubiquinone biosynthetic pathway. In Pasteurella multocida (strain Pm70), this protein is Ubiquinone biosynthesis O-methyltransferase.